The primary structure comprises 83 residues: Small ribosomal subunit protein bS16 (83 aa).

This sequence belongs to the bacterial ribosomal protein bS16 family.

The chain is Small ribosomal subunit protein bS16 from Pseudomonas entomophila (strain L48).